A 210-amino-acid chain; its full sequence is Large ribosomal subunit protein uL4 (210 aa).

The disordered stretch occupies residues 46–77 (QGTHKSKERGEIAGSTKKIKKQKGTGTARAGS).

This sequence belongs to the universal ribosomal protein uL4 family. In terms of assembly, part of the 50S ribosomal subunit.

In terms of biological role, one of the primary rRNA binding proteins, this protein initially binds near the 5'-end of the 23S rRNA. It is important during the early stages of 50S assembly. It makes multiple contacts with different domains of the 23S rRNA in the assembled 50S subunit and ribosome. Functionally, forms part of the polypeptide exit tunnel. This Amoebophilus asiaticus (strain 5a2) protein is Large ribosomal subunit protein uL4.